A 313-amino-acid polypeptide reads, in one-letter code: uncharacterized protein (313 aa).

This is an uncharacterized protein from Archaeoglobus fulgidus (strain ATCC 49558 / DSM 4304 / JCM 9628 / NBRC 100126 / VC-16).